Reading from the N-terminus, the 363-residue chain is 3-dehydroquinate synthase (363 aa).

Residues 75–80 (DAEEGK), 109–113 (GAVTD), 133–134 (TS), Lys146, Lys155, and 173–176 (TLQT) each bind NAD(+). Positions 188, 251, and 267 each coordinate Zn(2+).

The protein belongs to the sugar phosphate cyclases superfamily. Dehydroquinate synthase family. Requires Co(2+) as cofactor. Zn(2+) is required as a cofactor. It depends on NAD(+) as a cofactor.

The protein resides in the cytoplasm. The catalysed reaction is 7-phospho-2-dehydro-3-deoxy-D-arabino-heptonate = 3-dehydroquinate + phosphate. It participates in metabolic intermediate biosynthesis; chorismate biosynthesis; chorismate from D-erythrose 4-phosphate and phosphoenolpyruvate: step 2/7. Catalyzes the conversion of 3-deoxy-D-arabino-heptulosonate 7-phosphate (DAHP) to dehydroquinate (DHQ). The sequence is that of 3-dehydroquinate synthase from Paenarthrobacter aurescens (strain TC1).